Here is a 343-residue protein sequence, read N- to C-terminus: GTPase Obg (343 aa).

An Obg domain is found at 1-159; the sequence is MKFLDEAKVY…HWLWLRLKLI (159 aa). Residues 160–327 form the OBG-type G domain; sequence ADAGLVGLPN…ALRALLAAMD (168 aa). Residues 166-173, 191-195, 212-215, 279-282, and 308-310 each bind GTP; these read GLPNAGKS, FTTLH, DIPG, SKAD, and SAA. Positions 173 and 193 each coordinate Mg(2+).

This sequence belongs to the TRAFAC class OBG-HflX-like GTPase superfamily. OBG GTPase family. As to quaternary structure, monomer. The cofactor is Mg(2+).

It localises to the cytoplasm. Its function is as follows. An essential GTPase which binds GTP, GDP and possibly (p)ppGpp with moderate affinity, with high nucleotide exchange rates and a fairly low GTP hydrolysis rate. Plays a role in control of the cell cycle, stress response, ribosome biogenesis and in those bacteria that undergo differentiation, in morphogenesis control. The chain is GTPase Obg from Methylobacterium sp. (strain 4-46).